A 306-amino-acid polypeptide reads, in one-letter code: Eukaryotic translation initiation factor 2 subunit alpha (306 aa).

Residues 17 to 88 (DELVVVNVRQ…EKGYIDLSKR (72 aa)) enclose the S1 motif domain. Phosphoserine is present on serine 52. At threonine 179 the chain carries Phosphothreonine. Phosphoserine is present on residues serine 273, serine 295, serine 303, and serine 305.

Belongs to the eIF-2-alpha family. Eukaryotic translation initiation factor 2 eIF2 is a heterotrimeric complex composed of an alpha, a beta and a gamma subunit.

It is found in the cytoplasm. Its subcellular location is the cytosol. In terms of biological role, eIF-2 functions in the early steps of protein synthesis by forming a ternary complex with GTP and initiator tRNA. This complex binds to a 40S ribosomal subunit, followed by mRNA binding to form a 43S pre-initiation complex. Junction of the 60S ribosomal subunit to form the 80S initiation complex is preceded by hydrolysis of the GTP bound to eIF-2 and release of an eIF-2-GDP binary complex. In order for eIF-2 to recycle and catalyze another round of initiation, the GDP bound to eIF-2 must exchange with GTP by way of a reaction catalyzed by eIF2B. In Schizosaccharomyces pombe (strain 972 / ATCC 24843) (Fission yeast), this protein is Eukaryotic translation initiation factor 2 subunit alpha (tif211).